Consider the following 222-residue polypeptide: GEM-like protein 4 (222 aa).

The region spanning 95 to 173 is the GRAM domain; that stretch reads KIFKRLFRVS…CKIDRVNQSQ (79 aa).

Belongs to the GEM family.

The chain is GEM-like protein 4 from Arabidopsis thaliana (Mouse-ear cress).